Reading from the N-terminus, the 518-residue chain is Putative cytochrome P450 CYP13A6 (518 aa).

Cys463 serves as a coordination point for heme.

Belongs to the cytochrome P450 family. Requires heme as cofactor.

Its function is as follows. Cytochromes P450 are a group of heme-thiolate monooxygenases. They oxidize a variety of structurally unrelated compounds, including steroids, fatty acids, and xenobiotics. This is Putative cytochrome P450 CYP13A6 (cyp-13A6) from Caenorhabditis elegans.